Here is a 635-residue protein sequence, read N- to C-terminus: Endo-1,4-beta-xylanase B (635 aa).

Residues 1–337 (MNLKTAYEPY…KEAYYAVLKA (337 aa)) form the GH10 domain. Glu-150 acts as the Proton donor in catalysis. Residue Glu-255 is the Nucleophile of the active site.

Belongs to the glycosyl hydrolase 10 (cellulase F) family.

It carries out the reaction Endohydrolysis of (1-&gt;4)-beta-D-xylosidic linkages in xylans.. Its pathway is glycan degradation; xylan degradation. Functionally, b.fibrisolvens is located in the rumen of ruminant animals, where it contributes to the animal's digestion of plant material by hydrolyzing hemicellulose with its xylanases. This chain is Endo-1,4-beta-xylanase B (xynB), found in Butyrivibrio fibrisolvens.